Consider the following 139-residue polypeptide: MNKKVIYFLCTGNSCRSQMAEGWGKKYLGDEWDVYSAGIEAHGVNPNAVKAMKEIGIDISEQTSDTIDQELLQKADLVVTLCGHAADVCPATPSNKERVHWGFDDPAKAEGTDEEKWAVFRRVRDEIGKRIKTFAETGK.

Residues C10, C82, and C89 each act as nucleophile in the active site. Cystine bridges form between C10–C82 and C82–C89.

Belongs to the low molecular weight phosphotyrosine protein phosphatase family. Thioredoxin-coupled ArsC subfamily.

Its subcellular location is the cytoplasm. The catalysed reaction is arsenate + [thioredoxin]-dithiol + H(+) = arsenite + [thioredoxin]-disulfide + H2O. In terms of biological role, catalyzes the reduction of arsenate [As(V)] to arsenite [As(III)]. The protein is Arsenate reductase of Halalkalibacterium halodurans (strain ATCC BAA-125 / DSM 18197 / FERM 7344 / JCM 9153 / C-125) (Bacillus halodurans).